A 296-amino-acid polypeptide reads, in one-letter code: Cation-efflux pump FieF (296 aa).

Residues 1–18 are Cytoplasmic-facing; sequence MTQTSQYDFWVKLASRAS. The chain crosses the membrane as a helical span at residues 19–32; that stretch reads VATALTLITIKLLA. Topologically, residues 33–43 are periplasmic; the sequence is WLYSGSASMLA. Residues 44 to 60 traverse the membrane as a helical segment; it reads SLTDSFADTLASIINFI. Zn(2+)-binding residues include D47, D51, D70, H73, and H77. Topologically, residues 61 to 83 are cytoplasmic; the sequence is AIRYAIVPADHDHRYGHGKAEPL. Residues 84-105 form a helical membrane-spanning segment; the sequence is AALAQSAFIMGSAFLLLFYGGE. Topologically, residues 106-119 are periplasmic; it reads RLLNPSPVENATLG. Residues 120 to 138 form a helical membrane-spanning segment; the sequence is VVVSVVAIVLTLALVLLQK. Residues 139–145 lie on the Cytoplasmic side of the membrane; sequence RALAATN. A helical transmembrane segment spans residues 146-160; it reads STVVEADSLHYKSDL. Zn(2+) is bound by residues H155 and D159. At 161-180 the chain is on the periplasmic side; sequence FLNAAVLLALVLSQYGWWWA. Residues 181 to 200 traverse the membrane as a helical segment; sequence DGLFAVLIACYIGQQAFDLG. Over 201–296 the chain is Cytoplasmic; sequence YRSIQALLDR…DPVQVEPTTQ (96 aa). Residues H234, D235, H250, H263, H285, and D287 each coordinate Zn(2+).

This sequence belongs to the cation diffusion facilitator (CDF) transporter (TC 2.A.4) family. FieF subfamily. In terms of assembly, homodimer. The subunits are held together in a parallel orientation through zinc binding at the interface of the cytoplasmic domains.

It is found in the cell inner membrane. The catalysed reaction is Zn(2+)(in) + H(+)(out) = Zn(2+)(out) + H(+)(in). The enzyme catalyses Cd(2+)(in) + H(+)(out) = Cd(2+)(out) + H(+)(in). It carries out the reaction Fe(2+)(in) + H(+)(out) = Fe(2+)(out) + H(+)(in). With respect to regulation, cytoplasmic zinc binding may trigger movements of two electrically repulsive cytoplasmic domains and reorient transmembrane helices, thereby modulating coordination geometry of the active site for zinc transport. It may modulate activity in response to cytoplasmic metal fluctuations. Divalent metal cation transporter which exports Zn(2+), Cd(2+) and possibly Fe(2+). Zn(2+)/H(+) antiporter capable of using the proton motive force to remove Zn(2+) from the cytoplasm. May be involved in zinc and iron detoxification by efflux. The polypeptide is Cation-efflux pump FieF (Shewanella oneidensis (strain ATCC 700550 / JCM 31522 / CIP 106686 / LMG 19005 / NCIMB 14063 / MR-1)).